The following is a 258-amino-acid chain: UPF0246 protein Pnap_3166 (258 aa).

Belongs to the UPF0246 family.

This chain is UPF0246 protein Pnap_3166, found in Polaromonas naphthalenivorans (strain CJ2).